The chain runs to 182 residues: Dihydrofolate reductase (182 aa).

Positions Arg3–Lys180 constitute a DHFR domain. Residues Ala9 and Gly15–Asp21 contribute to the NADP(+) site. Glu29–Ser34 is a binding site for substrate. Arg53–Thr55 contributes to the NADP(+) binding site. Residue Arg69 coordinates substrate. NADP(+)-binding positions include Ser75–Thr77 and Gly113–Glu120.

Belongs to the dihydrofolate reductase family. As to quaternary structure, monomer. Interacts with vg.

The catalysed reaction is (6S)-5,6,7,8-tetrahydrofolate + NADP(+) = 7,8-dihydrofolate + NADPH + H(+). The protein operates within cofactor biosynthesis; tetrahydrofolate biosynthesis; 5,6,7,8-tetrahydrofolate from 7,8-dihydrofolate: step 1/1. Functionally, by interacting with vestigial (vg), may control genes involved in DNA replication. Its function is as follows. Key enzyme in folate metabolism. Catalyzes an essential reaction for de novo glycine and purine synthesis, and for DNA precursor synthesis. The protein is Dihydrofolate reductase (Dhfr) of Drosophila melanogaster (Fruit fly).